The sequence spans 1039 residues: Antigenic heat-stable 120 kDa protein (1039 aa).

Disordered stretches follow at residues M1–P115, S408–P438, and Q1020–R1039. Residues P31–T44 are compositionally biased toward polar residues. Residues E54–E69 are compositionally biased toward basic and acidic residues. Residues F85 to D114 show a composition bias toward low complexity. Residues A424–P438 show a composition bias toward polar residues. A compositionally biased stretch (basic and acidic residues) spans I1030–R1039.

It localises to the cytoplasm. The protein is Antigenic heat-stable 120 kDa protein (sca4) of Rickettsia felis (strain ATCC VR-1525 / URRWXCal2) (Rickettsia azadi).